A 504-amino-acid polypeptide reads, in one-letter code: UDP-N-acetylmuramoylalanine--D-glutamate ligase (504 aa).

Position 129 to 135 (129 to 135 (GTNGKTT)) interacts with ATP.

The protein belongs to the MurCDEF family.

The protein resides in the cytoplasm. The catalysed reaction is UDP-N-acetyl-alpha-D-muramoyl-L-alanine + D-glutamate + ATP = UDP-N-acetyl-alpha-D-muramoyl-L-alanyl-D-glutamate + ADP + phosphate + H(+). It participates in cell wall biogenesis; peptidoglycan biosynthesis. Its function is as follows. Cell wall formation. Catalyzes the addition of glutamate to the nucleotide precursor UDP-N-acetylmuramoyl-L-alanine (UMA). This Burkholderia mallei (strain ATCC 23344) protein is UDP-N-acetylmuramoylalanine--D-glutamate ligase.